A 377-amino-acid polypeptide reads, in one-letter code: Succinyl-diaminopimelate desuccinylase (377 aa).

Position 66 (His-66) interacts with Zn(2+). The active site involves Asp-68. Asp-99 is a Zn(2+) binding site. Residue Glu-133 is the Proton acceptor of the active site. Glu-134, Glu-162, and His-348 together coordinate Zn(2+).

Belongs to the peptidase M20A family. DapE subfamily. As to quaternary structure, homodimer. Zn(2+) is required as a cofactor. Co(2+) serves as cofactor.

It carries out the reaction N-succinyl-(2S,6S)-2,6-diaminopimelate + H2O = (2S,6S)-2,6-diaminopimelate + succinate. Its pathway is amino-acid biosynthesis; L-lysine biosynthesis via DAP pathway; LL-2,6-diaminopimelate from (S)-tetrahydrodipicolinate (succinylase route): step 3/3. Functionally, catalyzes the hydrolysis of N-succinyl-L,L-diaminopimelic acid (SDAP), forming succinate and LL-2,6-diaminopimelate (DAP), an intermediate involved in the bacterial biosynthesis of lysine and meso-diaminopimelic acid, an essential component of bacterial cell walls. The sequence is that of Succinyl-diaminopimelate desuccinylase from Xylella fastidiosa (strain M23).